The following is a 721-amino-acid chain: Dipeptidyl-peptidase 5 (721 aa).

The signal sequence occupies residues 1-18; the sequence is MGAFRWLSIAAAASTALA. 4 N-linked (GlcNAc...) asparagine glycosylation sites follow: Asn-75, Asn-94, Asn-151, and Asn-254. Residues 271-297 are disordered; sequence ARPINGPDSPGTPKGIKGDSSSPVFSP. N-linked (GlcNAc...) asparagine glycosylation is found at Asn-380 and Asn-450. Ser-560 functions as the Charge relay system in the catalytic mechanism. Asn-607 carries an N-linked (GlcNAc...) asparagine glycan. Residues Asp-643 and His-675 each act as charge relay system in the active site.

The protein belongs to the peptidase S9C family. N-glycosylated. In terms of tissue distribution, expressed in mycelia and conidia.

It localises to the secreted. May be involved in metabolism of dipeptides or may affect host defense mechanisms. Has a substrate specificity limited to the hydrolysis of X-Ala, His-Ser, and Ser-Tyr dipeptides at a neutral pH optimum. The polypeptide is Dipeptidyl-peptidase 5 (Aspergillus fumigatus (strain ATCC MYA-4609 / CBS 101355 / FGSC A1100 / Af293) (Neosartorya fumigata)).